The sequence spans 197 residues: Holliday junction branch migration complex subunit RuvA (197 aa).

The tract at residues 1 to 64 is domain I; that stretch reads MYEYIKGKYI…EDFIGVYGFL (64 aa). The segment at 65–144 is domain II; that stretch reads TKDELSMFKL…DILEEDDEQI (80 aa). A flexible linker region spans residues 145–149; that stretch reads INKVA. Residues 149–197 are domain III; that stretch reads ADDKKVLEAVAALVTLGYSEKEANKVINSCDKNNSLEQIIKEALKYLMK.

It belongs to the RuvA family. As to quaternary structure, homotetramer. Forms an RuvA(8)-RuvB(12)-Holliday junction (HJ) complex. HJ DNA is sandwiched between 2 RuvA tetramers; dsDNA enters through RuvA and exits via RuvB. An RuvB hexamer assembles on each DNA strand where it exits the tetramer. Each RuvB hexamer is contacted by two RuvA subunits (via domain III) on 2 adjacent RuvB subunits; this complex drives branch migration. In the full resolvosome a probable DNA-RuvA(4)-RuvB(12)-RuvC(2) complex forms which resolves the HJ.

The protein resides in the cytoplasm. The RuvA-RuvB-RuvC complex processes Holliday junction (HJ) DNA during genetic recombination and DNA repair, while the RuvA-RuvB complex plays an important role in the rescue of blocked DNA replication forks via replication fork reversal (RFR). RuvA specifically binds to HJ cruciform DNA, conferring on it an open structure. The RuvB hexamer acts as an ATP-dependent pump, pulling dsDNA into and through the RuvAB complex. HJ branch migration allows RuvC to scan DNA until it finds its consensus sequence, where it cleaves and resolves the cruciform DNA. In Clostridium botulinum (strain ATCC 19397 / Type A), this protein is Holliday junction branch migration complex subunit RuvA.